Here is a 201-residue protein sequence, read N- to C-terminus: ADP-ribosylation factor-like protein 4D (201 aa).

Glycine 2 carries the N-myristoyl glycine lipid modification. Residues 28–35 (GLDSAGKT), 76–80 (DVGGQ), and 135–138 (NKQD) contribute to the GTP site.

Belongs to the small GTPase superfamily. Arf family. As to quaternary structure, interacts with CYTH2; the interaction is direct and ARL4D GTP-dependent. Does not interact with ARL4D.

It is found in the nucleus. Its subcellular location is the nucleolus. The protein resides in the cell membrane. It localises to the cytoplasm. In terms of biological role, small GTP-binding protein which cycles between an inactive GDP-bound and an active GTP-bound form, and the rate of cycling is regulated by guanine nucleotide exchange factors (GEF) and GTPase-activating proteins (GAP). GTP-binding protein that does not act as an allosteric activator of the cholera toxin catalytic subunit. Recruits CYTH1, CYTH2, CYTH3 and CYTH4 to the plasma membrane in GDP-bound form. The protein is ADP-ribosylation factor-like protein 4D (ARL4D) of Homo sapiens (Human).